A 101-amino-acid chain; its full sequence is Putative pterin-4-alpha-carbinolamine dehydratase (101 aa).

Belongs to the pterin-4-alpha-carbinolamine dehydratase family.

The enzyme catalyses (4aS,6R)-4a-hydroxy-L-erythro-5,6,7,8-tetrahydrobiopterin = (6R)-L-erythro-6,7-dihydrobiopterin + H2O. In Rhodopseudomonas palustris (strain BisB18), this protein is Putative pterin-4-alpha-carbinolamine dehydratase.